Consider the following 187-residue polypeptide: Ribosome-recycling factor (187 aa).

It belongs to the RRF family.

The protein resides in the cytoplasm. In terms of biological role, responsible for the release of ribosomes from messenger RNA at the termination of protein biosynthesis. May increase the efficiency of translation by recycling ribosomes from one round of translation to another. In Methylobacterium radiotolerans (strain ATCC 27329 / DSM 1819 / JCM 2831 / NBRC 15690 / NCIMB 10815 / 0-1), this protein is Ribosome-recycling factor.